We begin with the raw amino-acid sequence, 641 residues long: ATP-dependent zinc metalloprotease FtsH (641 aa).

The Cytoplasmic portion of the chain corresponds to 1–16 (MNKQQKPKRSPLRPDY). The chain crosses the membrane as a helical span at residues 17–37 (LVIVIIILLAIGMYFFFTEMM). Residues 38–131 (APKVKQFDEF…VSFVPHVSVD (94 aa)) lie on the Extracellular side of the membrane. Residues 132 to 152 (FWNIISTLLLIAAPIVLVVIM) form a helical membrane-spanning segment. Over 153–641 (FRSMSSQSNK…EVEEDSKKSE (489 aa)) the chain is Cytoplasmic. Residue 222 to 229 (GQPGTGKT) participates in ATP binding. Residue histidine 444 coordinates Zn(2+). Glutamate 445 is an active-site residue. The Zn(2+) site is built by histidine 448 and aspartate 520.

The protein in the central section; belongs to the AAA ATPase family. It in the C-terminal section; belongs to the peptidase M41 family. In terms of assembly, homohexamer. Zn(2+) serves as cofactor.

It is found in the cell membrane. Its function is as follows. Acts as a processive, ATP-dependent zinc metallopeptidase for both cytoplasmic and membrane proteins. Plays a role in the quality control of integral membrane proteins. This chain is ATP-dependent zinc metalloprotease FtsH, found in Acholeplasma laidlawii (strain PG-8A).